The sequence spans 740 residues: NAD(P)H-quinone oxidoreductase subunit 5, chloroplastic (740 aa).

The next 16 helical transmembrane spans lie at 9-29, 40-60, 89-109, 125-145, 147-167, 185-205, 219-239, 258-278, 286-306, 327-347, 354-374, 396-416, 425-445, 543-563, 602-622, and 718-738; these read WIIPFIPLPVPMLIGAGLILF, WAFQSVLLLSIVMIFSIYLSI, IDPLTSIMSILITTVGIMVLI, FAYMSFFSTSMLGLVTSSNLI, IYIFWELVGLCSYLLIGFWFT, GDFGLLLGILGFYWITGSFEF, NEVNFLFVTLCAVLLFAGAVA, TPISALIHAATMVAAGIFLVA, VIPYIMYLISVIGIITVLLGA, LGYMMLALGMGSYRSALFHLI, ALLFLGSGSIIHSMETIVGYS, ITFLLGTLSLCGIPPLACFWS, WLYSPIFAIIAWATAGLTAFY, LFPIFVLGLFTLFVGSIGIPF, VLSVSIAYFGIFLASFLYKPI, and YLFLYLAYVSVFLLVYYLFFL.

Belongs to the complex I subunit 5 family. In terms of assembly, NDH is composed of at least 16 different subunits, 5 of which are encoded in the nucleus.

The protein resides in the plastid. It is found in the chloroplast thylakoid membrane. It carries out the reaction a plastoquinone + NADH + (n+1) H(+)(in) = a plastoquinol + NAD(+) + n H(+)(out). It catalyses the reaction a plastoquinone + NADPH + (n+1) H(+)(in) = a plastoquinol + NADP(+) + n H(+)(out). NDH shuttles electrons from NAD(P)H:plastoquinone, via FMN and iron-sulfur (Fe-S) centers, to quinones in the photosynthetic chain and possibly in a chloroplast respiratory chain. The immediate electron acceptor for the enzyme in this species is believed to be plastoquinone. Couples the redox reaction to proton translocation, and thus conserves the redox energy in a proton gradient. The protein is NAD(P)H-quinone oxidoreductase subunit 5, chloroplastic (ndhF) of Atropa belladonna (Belladonna).